Reading from the N-terminus, the 344-residue chain is Probable magnesium transporter NIPA9 (344 aa).

The Cytoplasmic segment spans residues 1–46 (MWESICLTLAATAGNNIGKVLQKKGTIILPPLSLKLKVLRAYAENK). The next 2 helical transmembrane spans lie at 47 to 67 (PWAL…RALS) and 68 to 88 (LAPV…LSVF). Residues 89–98 (SHFYLKEVMN) lie on the Cytoplasmic side of the membrane. Residues 99 to 119 (VFDWIGITVAGIGTIGVGAGG) form a helical membrane-spanning segment. Topologically, residues 120–125 (EEQEAS) are extracellular. Residues 126–146 (LISVFQLLWLALVVAILFVLL) form a helical membrane-spanning segment. Residues 147 to 166 (NAWLHIFKRQRREQELGEYE) lie on the Cytoplasmic side of the membrane. The chain crosses the membrane as a helical span at residues 167-187 (VVEEIIYGLESGILFGMASVV). The Extracellular portion of the chain corresponds to 188-191 (SKMG). Residues 192-212 (FVFVEQGFSTMFIPMCISISI) form a helical membrane-spanning segment. The Cytoplasmic segment spans residues 213–231 (CCSGTGFFYQTRGLKHGRA). A helical transmembrane segment spans residues 232-252 (IVVSTCAAVASIVTGVVAGMF). Topologically, residues 253–265 (ALGEKLPTSPSGR) are extracellular. Residues 266 to 286 (LLLLLGWLLIMLGVVLLVTSS) form a helical membrane-spanning segment. Residues 287–344 (RLIRHLPRSFRRSRQTSLERGFNIRRTTSHTPKDTNPSAVIQAATLHHLLSSPSKDKD) are Cytoplasmic-facing.

This sequence belongs to the NIPA (TC 2.A.7) family. In terms of assembly, homodimer.

The protein resides in the cell membrane. Its subcellular location is the early endosome. In terms of biological role, acts as a Mg(2+) transporter. Can also transport other divalent cations such as Fe(2+), Sr(2+), Ba(2+), Mn(2+) and Co(2+) but to a much less extent than Mg(2+). This Arabidopsis thaliana (Mouse-ear cress) protein is Probable magnesium transporter NIPA9.